A 50-amino-acid polypeptide reads, in one-letter code: uncharacterized protein (50 aa).

Residues 5 to 19 form a helical membrane-spanning segment; that stretch reads IIIIVIVIIIFFFYL. Residues 19-50 are a coiled coil; the sequence is LKQKKLTNCETQVVKVQKDIDEINLKLKKLNK.

Its subcellular location is the membrane. This is an uncharacterized protein from Acheta domesticus (House cricket).